A 257-amino-acid chain; its full sequence is uncharacterized protein (257 aa).

Disordered stretches follow at residues 86-119 and 182-206; these read SDEE…RPLS and STPL…TDGQ. A compositionally biased stretch (polar residues) spans 196–206; that stretch reads PTPTSQLTDGQ.

This is an uncharacterized protein from Invertebrate iridescent virus 3 (IIV-3).